Reading from the N-terminus, the 717-residue chain is F-box only protein 42 (717 aa).

Over residues 1–30 (MASSSDSEDDSFMAVDQEETVLEGTMEQDE) the composition is skewed to acidic residues. Residues 1-47 (MASSSDSEDDSFMAVDQEETVLEGTMEQDEEPHPVLEAEETRHNRSM) form a disordered region. Over residues 31 to 43 (EPHPVLEAEETRH) the composition is skewed to basic and acidic residues. An F-box domain is found at 44-93 (NRSMSELPEEVLEYILSFLSPYQEHKTAALVCKQWYRLIKGVAHQCYHGF). Kelch repeat units lie at residues 132–184 (SMYV…VYKD), 186–242 (LVLF…VIDD), 244–293 (MIVF…VIDD), and 295–342 (TILI…LWCH). 2 disordered regions span residues 361-472 (RAPL…SAAE) and 508-539 (PASS…GVHT). Low complexity predominate over residues 363-376 (PLSPSLNSRPSPIS). Residues S365 and S373 each carry the phosphoserine modification. The residue at position 378 (T378) is a Phosphothreonine. Polar residues-rich tracts occupy residues 416–426 (QRQTPSGSREG) and 455–469 (SLDS…STPS). S552 is subject to Phosphoserine. The span at 570 to 596 (GPSASAALSPPLGSSPGSPGSQSLSSG) shows a compositional bias: low complexity. Residues 570-635 (GPSASAALSP…PQSLNVGKPL (66 aa)) are disordered.

As to quaternary structure, component of some SCF complex, composed of CUL1, SKP1, RBX1 and FBXO42. Interacts (via the kelch domain) with p53/TP53; interaction is direct.

Functionally, substrate-recognition component of some SCF (SKP1-CUL1-F-box protein)-type E3 ubiquitin ligase complex. Specifically recognizes p53/TP53, promoting its ubiquitination and degradation. This is F-box only protein 42 (FBXO42) from Pongo abelii (Sumatran orangutan).